A 434-amino-acid polypeptide reads, in one-letter code: L-2-hydroxyglutarate dehydrogenase, mitochondrial (434 aa).

This sequence belongs to the L2HGDH family. Requires FAD as cofactor.

The protein localises to the mitochondrion. It catalyses the reaction (S)-2-hydroxyglutarate + A = 2-oxoglutarate + AH2. The chain is L-2-hydroxyglutarate dehydrogenase, mitochondrial from Caenorhabditis briggsae.